Here is a 201-residue protein sequence, read N- to C-terminus: Probable molybdenum cofactor guanylyltransferase (201 aa).

GTP is bound by residues 16–18 (LAG), Lys28, Asp75, and Asp107. Asp107 contacts Mg(2+).

It belongs to the MobA family. The cofactor is Mg(2+).

It localises to the cytoplasm. It catalyses the reaction Mo-molybdopterin + GTP + H(+) = Mo-molybdopterin guanine dinucleotide + diphosphate. Functionally, transfers a GMP moiety from GTP to Mo-molybdopterin (Mo-MPT) cofactor (Moco or molybdenum cofactor) to form Mo-molybdopterin guanine dinucleotide (Mo-MGD) cofactor. The chain is Probable molybdenum cofactor guanylyltransferase from Mycobacterium marinum (strain ATCC BAA-535 / M).